The primary structure comprises 197 residues: Ribonuclease HII (197 aa).

The RNase H type-2 domain maps to 3–192 (QLIAGVDEVG…VQLSLMQRGG (190 aa)). A divalent metal cation contacts are provided by Asp-9, Glu-10, and Asp-101.

The protein belongs to the RNase HII family. The cofactor is Mn(2+). It depends on Mg(2+) as a cofactor.

It is found in the cytoplasm. It catalyses the reaction Endonucleolytic cleavage to 5'-phosphomonoester.. Endonuclease that specifically degrades the RNA of RNA-DNA hybrids. This Pseudoalteromonas atlantica (strain T6c / ATCC BAA-1087) protein is Ribonuclease HII.